A 1146-amino-acid polypeptide reads, in one-letter code: ATP-dependent helicase/deoxyribonuclease subunit B (1146 aa).

One can recognise a UvrD-like helicase ATP-binding domain in the interval 1–280; it reads MSLRFIYGRA…LNSKPLFRFS (280 aa). 8 to 15 contributes to the ATP binding site; that stretch reads GRAGSGKT. In terms of domain architecture, UvrD-like helicase C-terminal spans 276-584; it reads LFRFSQSPEL…LVGSLERSRS (309 aa). Residues C786, C1105, C1108, and C1114 each contribute to the [4Fe-4S] cluster site.

Belongs to the helicase family. AddB/RexB type 1 subfamily. In terms of assembly, heterodimer of AddA and AddB. Mg(2+) serves as cofactor. Requires [4Fe-4S] cluster as cofactor.

Functionally, the heterodimer acts as both an ATP-dependent DNA helicase and an ATP-dependent, dual-direction single-stranded exonuclease. Recognizes the chi site generating a DNA molecule suitable for the initiation of homologous recombination. The AddB subunit has 5' -&gt; 3' nuclease activity but not helicase activity. This Acetivibrio thermocellus (strain ATCC 27405 / DSM 1237 / JCM 9322 / NBRC 103400 / NCIMB 10682 / NRRL B-4536 / VPI 7372) (Clostridium thermocellum) protein is ATP-dependent helicase/deoxyribonuclease subunit B.